Consider the following 552-residue polypeptide: DNA ligase (552 aa).

Residue glutamate 229 coordinates ATP. Catalysis depends on lysine 231, which acts as the N6-AMP-lysine intermediate. ATP-binding residues include arginine 236 and glutamate 283. Positions 283 and 377 each coordinate Mg(2+). 2 residues coordinate ATP: lysine 382 and lysine 397.

The protein belongs to the ATP-dependent DNA ligase family. In terms of assembly, interacts with host TOP2A and TOP2B. Mg(2+) serves as cofactor.

It localises to the host cytoplasm. It carries out the reaction ATP + (deoxyribonucleotide)n-3'-hydroxyl + 5'-phospho-(deoxyribonucleotide)m = (deoxyribonucleotide)n+m + AMP + diphosphate.. Its function is as follows. DNA ligase that seals nicks in double-stranded DNA during DNA replication, DNA recombination and DNA repair. Recruits cellular topoisomerase II to sites of viral replication and assembly. Contributes to the repair of the viral genome following UV irradiation. This is DNA ligase (OPG180) from Vaccinia virus (strain Western Reserve) (VACV).